Here is a 434-residue protein sequence, read N- to C-terminus: Histidine--tRNA ligase (434 aa).

Belongs to the class-II aminoacyl-tRNA synthetase family. Homodimer.

It is found in the cytoplasm. It carries out the reaction tRNA(His) + L-histidine + ATP = L-histidyl-tRNA(His) + AMP + diphosphate + H(+). This is Histidine--tRNA ligase from Latilactobacillus sakei subsp. sakei (strain 23K) (Lactobacillus sakei subsp. sakei).